The following is a 1182-amino-acid chain: Tyrosine-protein kinase ABL2 (1182 aa).

Disordered stretches follow at residues 1–47 (MGQQ…TGFN) and 60–80 (EDGF…HRPY). The N-myristoyl glycine moiety is linked to residue glycine 2. The segment at 2–106 (GQQVGRVGEA…SKENLLGATE (105 aa)) is CAP. A compositionally biased stretch (low complexity) spans 20 to 30 (RGIRGSSAARP). A Phosphoserine modification is found at serine 97. Positions 107–167 (SDPNLFVALY…PSNYITPVNS (61 aa)) constitute an SH3 domain. Phosphotyrosine is present on residues tyrosine 116, tyrosine 161, tyrosine 174, tyrosine 185, tyrosine 218, and tyrosine 231. Residues 173 to 263 (WYHGPVSRSA…GLVTTLHYPA (91 aa)) form the SH2 domain. At tyrosine 261 the chain carries Phosphotyrosine; by ABL1 and autocatalysis. Tyrosine 272 bears the Phosphotyrosine; by autocatalysis mark. Phosphoserine is present on serine 275. In terms of domain architecture, Protein kinase spans 288–539 (ITMKHKLGGG…PSFAETHQAF (252 aa)). 294–302 (LGGGQYGEV) provides a ligand contact to ATP. A phosphotyrosine mark is found at tyrosine 299 and tyrosine 303. Residues lysine 317 and 362-368 (EYMPYGN) contribute to the ATP site. The active-site Proton acceptor is aspartate 409. The Kinase activation loop signature appears at 427 to 451 (DFGLSRLMTGDTYTAHAGAKFPIKW). Tyrosine 439 is subject to Phosphotyrosine; by autocatalysis and SRC-type Tyr-kinases. A Phosphotyrosine modification is found at tyrosine 459. Tyrosine 568 carries the post-translational modification Phosphotyrosine; by autocatalysis. The interval 611-641 (IRGAQASSGSPALPRKQRDKSPSSLLEDAKE) is disordered. Serine 620, serine 631, and serine 633 each carry phosphoserine. Aspartate 647 is modified (phosphotyrosine). The disordered stretch occupies residues 654–674 (SSFMKKRNAPTPPKRSSSFRE). Residue serine 655 is modified to Phosphoserine. The Nuclear localization signal motif lies at 658-660 (KKR). Alanine 662 and arginine 668 each carry phosphotyrosine. Serine 669, serine 670, and serine 671 each carry phosphoserine. Phosphotyrosine is present on residues tyrosine 683 and tyrosine 718. Position 683 is a phosphotyrosine; by autocatalysis (tyrosine 683). The tract at residues 694–930 (SLQHADGFSF…PVLPTTHNHK (237 aa)) is F-actin-binding. The disordered stretch occupies residues 763 to 794 (LRAGKPTASDDTSKPFPRSNSTSSMSSGLPEQ). The residue at position 776 (lysine 776) is an N6-acetyllysine. A compositionally biased stretch (polar residues) spans 780–791 (RSNSTSSMSSGL). Position 783 is a phosphoserine (serine 783). Residue threonine 800 is modified to Phosphothreonine. Over residues 807-823 (RSKLQLERTVSTSSQPE) the composition is skewed to polar residues. The segment at 807–851 (RSKLQLERTVSTSSQPEENVDRANDMLPKKSEESAAPSRERPKAK) is disordered. Residues serine 817 and serine 820 each carry the phosphoserine modification. Over residues 825–849 (NVDRANDMLPKKSEESAAPSRERPK) the composition is skewed to basic and acidic residues. Serine 915 and serine 936 each carry phosphoserine. Residues 964-1024 (HQVTSSGDKD…TSETQEGGKK (61 aa)) form a disordered region. Over residues 1010 to 1019 (TAGQSTSETQ) the composition is skewed to polar residues. Positions 1020 to 1182 (EGGKKAALGA…VQEISDVVQR (163 aa)) are F-actin-binding.

The protein belongs to the protein kinase superfamily. Tyr protein kinase family. ABL subfamily. Interacts with PSMA7. Interacts with CTTN. Found in a complex with ABL1, ABL2, CRK and UNC119; leading to the inhibition of CRK phosphorylation by ABL kinases. It depends on Mg(2+) as a cofactor. The cofactor is Mn(2+). Phosphorylated at Tyr-261 by ABL1 in response to oxidative stress. Phosphorylated by PDGFRB. In terms of processing, polyubiquitinated. Polyubiquitination of ABL2 leads to degradation. In terms of tissue distribution, widely expressed.

The protein resides in the cytoplasm. It is found in the cytoskeleton. It catalyses the reaction L-tyrosyl-[protein] + ATP = O-phospho-L-tyrosyl-[protein] + ADP + H(+). Stabilized in the inactive form by an association between the SH3 domain and the SH2-TK linker region, interactions of the N-terminal cap, and contributions from an N-terminal myristoyl group and phospholipids. Activated by autophosphorylation as well as by SRC-family kinase-mediated phosphorylation. Activated by RIN1 binding to the SH2 and SH3 domains. Inhibited by imatinib mesylate (Gleevec) which is used for the treatment of chronic myeloid leukemia (CML). Phosphatidylinositol 4,5-bisphosphate (PIP2), a highly abundant phosphoinositide known to regulate cytoskeletal and membrane proteins, inhibits the tyrosine kinase activity. Non-receptor tyrosine-protein kinase that plays an ABL1-overlapping role in key processes linked to cell growth and survival such as cytoskeleton remodeling in response to extracellular stimuli, cell motility and adhesion and receptor endocytosis. Coordinates actin remodeling through tyrosine phosphorylation of proteins controlling cytoskeleton dynamics like MYH10 (involved in movement); CTTN (involved in signaling); or TUBA1 and TUBB (microtubule subunits). Binds directly F-actin and regulates actin cytoskeletal structure through its F-actin-bundling activity. Involved in the regulation of cell adhesion and motility through phosphorylation of key regulators of these processes such as CRK, CRKL, DOK1 or ARHGAP35. Adhesion-dependent phosphorylation of ARHGAP35 promotes its association with RASA1, resulting in recruitment of ARHGAP35 to the cell periphery where it inhibits RHO. Phosphorylates multiple receptor tyrosine kinases like PDGFRB and other substrates which are involved in endocytosis regulation such as RIN1. In brain, may regulate neurotransmission by phosphorylating proteins at the synapse. ABL2 also acts as a regulator of multiple pathological signaling cascades during infection. Pathogens can highjack ABL2 kinase signaling to reorganize the host actin cytoskeleton for multiple purposes, like facilitating intracellular movement and host cell exit. Finally, functions as its own regulator through autocatalytic activity as well as through phosphorylation of its inhibitor, ABI1. Positively regulates chemokine-mediated T-cell migration, polarization, and homing to lymph nodes and immune-challenged tissues, potentially via activation of NEDD9/HEF1 and RAP1. The sequence is that of Tyrosine-protein kinase ABL2 (ABL2) from Homo sapiens (Human).